The chain runs to 339 residues: uncharacterized protein (339 aa).

NADP(+)-binding residues include Ile54, Lys78, Asp101, Asn128, Tyr213, and Lys217. Tyr213 functions as the Proton donor in the catalytic mechanism. Residue Lys217 is the Lowers pKa of active site Tyr of the active site.

This sequence belongs to the short-chain dehydrogenases/reductases (SDR) family.

This is an uncharacterized protein from Schizosaccharomyces pombe (strain 972 / ATCC 24843) (Fission yeast).